The sequence spans 437 residues: Bile acid CoA-transferase BaiK (437 aa).

Residue Asp171 is the Nucleophile of the active site.

The protein belongs to the CoA-transferase III family.

It catalyses the reaction deoxycholoyl-CoA + cholate = choloyl-CoA + deoxycholate. The catalysed reaction is allodeoxycholoyl-CoA + cholate = allodeoxycholate + choloyl-CoA. The enzyme catalyses allocholate + deoxycholoyl-CoA = allocholoyl-CoA + deoxycholate. It carries out the reaction allocholate + allodeoxycholoyl-CoA = allocholoyl-CoA + allodeoxycholate. It catalyses the reaction ursodeoxycholate + deoxycholoyl-CoA = ursodeoxycholoyl-CoA + deoxycholate. The catalysed reaction is allodeoxycholoyl-CoA + ursodeoxycholate = ursodeoxycholoyl-CoA + allodeoxycholate. It functions in the pathway lipid metabolism; bile acid biosynthesis. Functions in the bile acid 7alpha-dehydroxylation pathway, which forms secondary bile acids via the 7alpha-dehydroxylation of primary bile acids, and is carried out by intestinal anaerobic bacteria. Acts as a bile acid CoA transferase with broad bile acid substrate specificity. Catalyzes the transfer of the CoA moiety of secondary bile acid-CoA compounds to primary bile acids. Can use deoxycholoyl-CoA and allodeoxycholoyl-CoA as bile acid CoA donors and cholate, allocholate and ursodeoxycholate as bile acid CoA acceptors. Shows no activity when lithocholoyl-CoA is used as the CoA donor. The sequence is that of Bile acid CoA-transferase BaiK from Clostridium scindens (strain JCM 10418 / VPI 12708).